The following is a 112-amino-acid chain: Protein lin-52 homolog (112 aa).

This sequence belongs to the lin-52 family. Component of the DREAM complex.

This Gallus gallus (Chicken) protein is Protein lin-52 homolog (LIN52).